Here is a 70-residue protein sequence, read N- to C-terminus: Delta-hexatoxin-Mg1b (70 aa).

The first 26 residues, 1–26, serve as a signal peptide directing secretion; the sequence is MKILEKALLENDSAAEEESRNLRTKR. 4 disulfide bridges follow: C27/C41, C34/C46, C40/C57, and C42/C68.

Expressed by the venom gland.

It localises to the secreted. Inhibits tetrodotoxin-sensitive sodium channels (Nav). Intracranial injection into mice causes strong convulsions and death. Intrathorax injection into crickets causes paralysis prolonged for 2 minutes, followed by recovery. This Macrothele gigas (Japanese funnel web spider) protein is Delta-hexatoxin-Mg1b.